The following is a 277-amino-acid chain: Ribosomal RNA small subunit methyltransferase I (277 aa).

This sequence belongs to the methyltransferase superfamily. RsmI family.

It is found in the cytoplasm. It catalyses the reaction cytidine(1402) in 16S rRNA + S-adenosyl-L-methionine = 2'-O-methylcytidine(1402) in 16S rRNA + S-adenosyl-L-homocysteine + H(+). In terms of biological role, catalyzes the 2'-O-methylation of the ribose of cytidine 1402 (C1402) in 16S rRNA. This Mycoplasma genitalium (strain ATCC 33530 / DSM 19775 / NCTC 10195 / G37) (Mycoplasmoides genitalium) protein is Ribosomal RNA small subunit methyltransferase I.